Here is a 307-residue protein sequence, read N- to C-terminus: Cytochrome c1 1, heme protein, mitochondrial (307 aa).

A mitochondrion-targeting transit peptide spans 1–64 (MVGGGVIQQI…LLSFSTVASA (64 aa)). Over 65 to 270 (DEAEHGLESP…EPEMEERKLM (206 aa)) the chain is Mitochondrial intermembrane. The region spanning 90 to 246 (ASIRRGHQVY…YEDGVPATEA (157 aa)) is the Cytochrome c domain. 4 residues coordinate heme c: cysteine 103, cysteine 106, histidine 107, and methionine 226. The chain crosses the membrane as a helical span at residues 271–288 (GFKWIFLLSLALLQAAYY). The Mitochondrial matrix portion of the chain corresponds to 289–307 (RRLKWSVLKSRKLVLDVVN).

Belongs to the cytochrome c family. Component of the ubiquinol-cytochrome c oxidoreductase (cytochrome b-c1 complex, complex III, CIII), a multisubunit enzyme composed of 10 subunits. The complex is composed of 3 respiratory subunits cytochrome b (MT-CYB), cytochrome c1 (CYC1-1 or CYC1-2) and Rieske protein (UCR1-1 or UCR1-2), 2 core protein subunits MPPalpha1 (or MPPalpha2) and MPPB, and 5 low-molecular weight protein subunits QCR7-1 (or QCR7-2), UCRQ-1 (or UCRQ-2), QCR9, UCRY and probably QCR6-1 (or QCR6-2). The complex exists as an obligatory dimer and forms supercomplexes (SCs) in the inner mitochondrial membrane with NADH-ubiquinone oxidoreductase (complex I, CI), resulting in different assemblies (supercomplexes SCI(1)III(2) and SCI(2)III(4)). Binds 1 heme c group covalently per subunit.

Its subcellular location is the mitochondrion inner membrane. Component of the ubiquinol-cytochrome c oxidoreductase, a multisubunit transmembrane complex that is part of the mitochondrial electron transport chain which drives oxidative phosphorylation. The respiratory chain contains 3 multisubunit complexes succinate dehydrogenase (complex II, CII), ubiquinol-cytochrome c oxidoreductase (cytochrome b-c1 complex, complex III, CIII) and cytochrome c oxidase (complex IV, CIV), that cooperate to transfer electrons derived from NADH and succinate to molecular oxygen, creating an electrochemical gradient over the inner membrane that drives transmembrane transport and the ATP synthase. The cytochrome b-c1 complex catalyzes electron transfer from ubiquinol to cytochrome c, linking this redox reaction to translocation of protons across the mitochondrial inner membrane, with protons being carried across the membrane as hydrogens on the quinol. In the process called Q cycle, 2 protons are consumed from the matrix, 4 protons are released into the intermembrane space and 2 electrons are passed to cytochrome c. Cytochrome c1 is a catalytic core subunit containing a c-type heme. It transfers electrons from the [2Fe-2S] iron-sulfur cluster of the Rieske protein to cytochrome c. The sequence is that of Cytochrome c1 1, heme protein, mitochondrial (CYC1-1) from Arabidopsis thaliana (Mouse-ear cress).